The following is a 176-amino-acid chain: Transcription termination/antitermination protein NusG (176 aa).

One can recognise a KOW domain in the interval Gly125 to His149.

Belongs to the NusG family.

Participates in transcription elongation, termination and antitermination. In Helicobacter pylori (strain ATCC 700392 / 26695) (Campylobacter pylori), this protein is Transcription termination/antitermination protein NusG.